The following is a 142-amino-acid chain: Large-conductance mechanosensitive channel (142 aa).

The next 3 helical transmembrane spans lie at 14–34 (VMDL…VDSV), 38–58 (LVMP…NYFL), and 82–102 (GNFI…FLLI).

This sequence belongs to the MscL family. In terms of assembly, homopentamer.

It is found in the cell inner membrane. Functionally, channel that opens in response to stretch forces in the membrane lipid bilayer. May participate in the regulation of osmotic pressure changes within the cell. The chain is Large-conductance mechanosensitive channel from Rhizobium meliloti (strain 1021) (Ensifer meliloti).